The primary structure comprises 346 residues: Dihydroorotase (346 aa).

2 residues coordinate Zn(2+): His17 and His19. Residues 19-21 (HVR) and Asn45 contribute to the substrate site. The Zn(2+) site is built by Lys102, His139, and His177. Lys102 is modified (N6-carboxylysine). His139 contacts substrate. Residue Leu222 participates in substrate binding. Asp250 lines the Zn(2+) pocket. Residue Asp250 is part of the active site. Residues His254 and Ala266 each contribute to the substrate site.

It belongs to the metallo-dependent hydrolases superfamily. DHOase family. Class II DHOase subfamily. In terms of assembly, homodimer. The cofactor is Zn(2+).

It catalyses the reaction (S)-dihydroorotate + H2O = N-carbamoyl-L-aspartate + H(+). Its pathway is pyrimidine metabolism; UMP biosynthesis via de novo pathway; (S)-dihydroorotate from bicarbonate: step 3/3. Its function is as follows. Catalyzes the reversible cyclization of carbamoyl aspartate to dihydroorotate. This is Dihydroorotase from Delftia acidovorans (strain DSM 14801 / SPH-1).